Consider the following 263-residue polypeptide: Urease accessory protein UreH (263 aa).

This sequence belongs to the UreD family. As to quaternary structure, ureH, UreF and UreG form a complex that acts as a GTP-hydrolysis-dependent molecular chaperone, activating the urease apoprotein by helping to assemble the nickel containing metallocenter of UreC. The UreE protein probably delivers the nickel.

It localises to the cytoplasm. In terms of biological role, required for maturation of urease via the functional incorporation of the urease nickel metallocenter. The polypeptide is Urease accessory protein UreH (Helicobacter acinonychis (strain Sheeba)).